A 771-amino-acid chain; its full sequence is Probable glycosyltransferase STELLO1 (771 aa).

A disordered region spans residues Met-1–Pro-23. Residues Met-1 to Arg-50 lie on the Cytoplasmic side of the membrane. The helical transmembrane segment at Ile-51 to Thr-71 threads the bilayer. Residues Asp-72–Val-771 lie on the Lumenal side of the membrane. Residues Asn-242 and Asn-729 are each glycosylated (N-linked (GlcNAc...) asparagine).

The protein belongs to the STELLO family. Homo- and heterodimer with STL2. Interacts with CESA1, CESA3, CESA4, CESA6, CESA7 and CESA8, but not with GOT1. In terms of tissue distribution, expressed in cells that are expanding or producing secondary cell walls.

It localises to the golgi apparatus membrane. Probable glycosyltransferase regulating the assembly and trafficking of cellulose synthase complexes. The protein is Probable glycosyltransferase STELLO1 of Arabidopsis thaliana (Mouse-ear cress).